Consider the following 177-residue polypeptide: Large ribosomal subunit protein uL5m (177 aa).

The protein belongs to the universal ribosomal protein uL5 family.

It is found in the mitochondrion. The protein is Large ribosomal subunit protein uL5m (RPL5) of Acanthamoeba castellanii (Amoeba).